A 491-amino-acid polypeptide reads, in one-letter code: Cobyric acid synthase (491 aa).

The region spanning 250–439 is the GATase cobBQ-type domain; the sequence is ELNIIVIRLP…LHGIFDNGSW (190 aa). Cys331 serves as the catalytic Nucleophile. Residue His431 is part of the active site.

The protein belongs to the CobB/CobQ family. CobQ subfamily.

The protein operates within cofactor biosynthesis; adenosylcobalamin biosynthesis. Functionally, catalyzes amidations at positions B, D, E, and G on adenosylcobyrinic A,C-diamide. NH(2) groups are provided by glutamine, and one molecule of ATP is hydrogenolyzed for each amidation. In Microcystis aeruginosa (strain NIES-843 / IAM M-2473), this protein is Cobyric acid synthase.